We begin with the raw amino-acid sequence, 266 residues long: Chymotrypsin-like elastase family member 1 (266 aa).

Residues 1–16 (MLRLLVFTSLVLYGHS) form the signal peptide. Residues 17 to 26 (TQDFPETNAR) constitute a propeptide, activation peptide. In terms of domain architecture, Peptidase S1 spans 27 to 264 (VVGGTAVSKN…YISWINNAIA (238 aa)). A disulfide bond links C56 and C72. The Charge relay system role is filled by H71. Residues D85, N87, Q90, and E95 each contribute to the Ca(2+) site. N-linked (GlcNAc...) asparagine glycosylation occurs at N87. D119 functions as the Charge relay system in the catalytic mechanism. Cystine bridges form between C153/C220, C184/C200, and C210/C240. S214 serves as the catalytic Charge relay system. Residue N241 is glycosylated (N-linked (GlcNAc...) asparagine).

This sequence belongs to the peptidase S1 family. Elastase subfamily. It depends on Ca(2+) as a cofactor. In terms of tissue distribution, pancreas.

The protein resides in the secreted. It carries out the reaction Hydrolysis of proteins, including elastin. Preferential cleavage: Ala-|-Xaa.. Functionally, serine proteases that hydrolyze many proteins in addition to elastin. In Bos taurus (Bovine), this protein is Chymotrypsin-like elastase family member 1 (CELA1).